The primary structure comprises 223 residues: Cytidylate kinase (223 aa).

12–20 (GPSGVGKGT) serves as a coordination point for ATP.

It belongs to the cytidylate kinase family. Type 1 subfamily.

It localises to the cytoplasm. It catalyses the reaction CMP + ATP = CDP + ADP. The enzyme catalyses dCMP + ATP = dCDP + ADP. The protein is Cytidylate kinase of Xylella fastidiosa (strain M23).